The sequence spans 261 residues: DNA repair protein RecO (261 aa).

This sequence belongs to the RecO family.

Its function is as follows. Involved in DNA repair and RecF pathway recombination. The sequence is that of DNA repair protein RecO from Limosilactobacillus reuteri (strain DSM 20016) (Lactobacillus reuteri).